The sequence spans 2480 residues: Polyprotein P1234 (2480 aa).

The Alphavirus-like MT domain maps to 27-257 (ESQQVTPNDH…ESRRLLKSWH (231 aa)). The interval 242–261 (GXTLYIESRRLLKSWHLPSV) is nsP1 membrane-binding. 2 S-palmitoyl cysteine; by host lipidation sites follow: Cys415 and Cys417. The interval 480–506 (YSGDRNEAREAEKEAEETKEAELTREA) is disordered. Residues 483 to 504 (DRNEAREAEKEAEETKEAELTR) show a composition bias toward basic and acidic residues. The region spanning 688-840 (DLINPPFHEF…HDICTQVLHK (153 aa)) is the (+)RNA virus helicase ATP-binding domain. 719–726 (GVPGSGKS) provides a ligand contact to a ribonucleoside 5'-triphosphate. In terms of domain architecture, (+)RNA virus helicase C-terminal spans 841–989 (SISRRCTLPI…LEEWQEEHDN (149 aa)). In terms of domain architecture, Peptidase C9 spans 1002-1324 (DPFQNKAKVC…QRLSSMFACN (323 aa)). Residues 1003–1022 (PFQNKAKVCWAKCLVQVLET) form a nucleolus localization signal region. Cys1011 serves as the catalytic For cysteine protease nsP2 activity. The Nuclear export signal motif lies at 1055-1064 (TKYYGVDLDS). His1080 serves as the catalytic For cysteine protease nsP2 activity. A Nuclear localization signal motif is present at residues 1179 to 1183 (PHKRV). In terms of domain architecture, Macro spans 1332 to 1491 (APSYRVRRTD…KIQEAIDRRT (160 aa)). Residues Asp1341, Asn1355, Gly1363, Gly1443, Val1444, and Phe1445 each coordinate ADP-D-ribose. The Zn(2+) site is built by Cys1593, Cys1595, Cys1618, and Cys1636. The residue at position 1675 (Thr1675) is a Phosphothreonine; by host. Short sequence motifs (FGDF; binding to host G3BP1) lie at residues 1843 to 1846 (FGDF) and 1854 to 1857 (FGDI). Residues 2234-2349 (DAVLETDIAS…HGVRSDPLMA (116 aa)) form the RdRp catalytic domain.

In terms of assembly, interacts with non-structural protein 3. Interacts with RNA-directed RNA polymerase nsP4. Interacts with protease nsP2. interacts with itself. Interacts with mRNA-capping enzyme nsP1. Interacts with host DDX1. Interacts with host DDX3. Interacts (via C-terminus) with host G3BP1; this interaction inhibits the formation of host stress granules on viral mRNAs and the nsp3-G3BP1 complexes bind viral RNAs and probably orchestrate the assembly of viral replication complexes. Interacts (via C-terminus) with host G3BP2; this interaction inhibits the formation of host stress granules on viral mRNAs and the nsp3-G3BP2 complexes bind viral RNAs and probably orchestrate the assembly of viral replication complexes. As to quaternary structure, interacts with mRNA-capping enzyme nsP1. Interacts with protease nsP2. interacts with itself. In terms of assembly, interacts with RNA-directed RNA polymerase nsP4. Interacts with mRNA-capping enzyme nsP1. Interacts with KPNA1/karyopherin-alpha1; this interaction probably allows the active transport of protease nsP2 into the host nucleus. It depends on Mg(2+) as a cofactor. Requires Mn(2+) as cofactor. Post-translationally, specific enzymatic cleavages in vivo yield mature proteins. The processing of the polyprotein is temporally regulated. In early stages (1.7 hpi), P1234 is first cleaved in trans through its nsP2 protease activity, releasing P123' and nsP4, which associate to form the early replication complex. At the same time, P1234 is also cut at the nsP1/nsP2 site early in infection but with lower efficiency. After replication of the viral minus-strand RNAs (4 hpi), the polyproteins are cut at the nsP1/nsP2 and nsP2/nsP3 sites very efficiently, preventing accumulation of P123' and P1234 and allowing the formation of the late replication complex. NsP3'/nsP4 site is not cleaved anymore and P34 is produced rather than nsP4. Specific enzymatic cleavages in vivo yield mature proteins. The processing of the polyprotein is temporally regulated. In early stages (1.7 hpi), P123 is cleaved at the nsP1/nsP2 site with low efficiency. After replication of the viral minus-strand RNAs (4 hpi), the polyproteins are cut at the nsP1/nsP2 and nsP2/nsP3 sites very efficiently, preventing accumulation of P123 and allowing the formation of the late replication complex. In terms of processing, specific enzymatic cleavages in vivo yield mature proteins. The processing of the polyprotein is temporally regulated. In early stages (1.7 hpi), P123' is cleaved at the nsP1/nsP2 site with low efficiency. After replication of the viral minus-strand RNAs (4 hpi), the polyproteins are cut at the nsP1/nsP2 and nsP2/nsP3 sites very efficiently, preventing accumulation of P123' and allowing the formation of the late replication complex. Post-translationally, palmitoylated by host palmitoyltransferases ZDHHC2 and ZDHHC19. Phosphorylated by host on serines and threonines. In terms of processing, ubiquitinated; targets the protein for rapid degradation via the ubiquitin system. Nsp4 is present in extremely low quantities due to low frequency of translation through the amber stop-codon and the degradation by the ubiquitin pathway.

It localises to the host cytoplasmic vesicle membrane. The protein localises to the host cell membrane. The protein resides in the host cell projection. It is found in the host filopodium. Its subcellular location is the host nucleus. It localises to the host cytoplasm. It carries out the reaction GTP + S-adenosyl-L-methionine = N(7)-methyl-GTP + S-adenosyl-L-homocysteine. It catalyses the reaction N(7)-methyl-GTP + L-histidyl-[protein] = N(tele)-(N(7)-methylguanosine 5'-phospho)-L-histidyl-[protein] + diphosphate. The catalysed reaction is N(tele)-(N(7)-methylguanosine 5'-phospho)-L-histidyl-[protein] + a 5'-end diphospho-(purine-ribonucleoside) in mRNA + H(+) = a 5'-end (N(7)-methyl 5'-triphosphoguanosine)-(purine-ribonucleoside) in mRNA + L-histidyl-[protein]. The enzyme catalyses a 5'-end triphospho-ribonucleoside in mRNA + H2O = a 5'-end diphospho-ribonucleoside in mRNA + phosphate + H(+). It carries out the reaction a ribonucleoside 5'-triphosphate + H2O = a ribonucleoside 5'-diphosphate + phosphate + H(+). It catalyses the reaction ATP + H2O = ADP + phosphate + H(+). The catalysed reaction is RNA(n) + a ribonucleoside 5'-triphosphate = RNA(n+1) + diphosphate. The enzyme catalyses 4-O-(ADP-D-ribosyl)-L-aspartyl-[protein] + H2O = L-aspartyl-[protein] + ADP-D-ribose + H(+). It carries out the reaction 5-O-(ADP-D-ribosyl)-L-glutamyl-[protein] + H2O = L-glutamyl-[protein] + ADP-D-ribose + H(+). It catalyses the reaction RNA(n) + ATP = RNA(n)-3'-adenine ribonucleotide + diphosphate. The catalysed reaction is ADP-alpha-D-ribose 1''-phosphate + H2O = ADP-D-ribose + phosphate. Its function is as follows. Inactive precursor of the viral replicase, which is activated by cleavages carried out by the viral protease nsP2. The early replication complex formed by the polyprotein P123 and nsP4 synthesizes minus-strand RNAs. As soon P123 is cleaved into mature proteins, the plus-strand RNAs synthesis begins. In terms of biological role, the early replication complex formed by the polyprotein P123' and nsP4 synthesizes minus-strand RNAs. Polyprotein P123' is a short-lived polyprotein that accumulates during early stage of infection. As soon P123' is cleaved into mature proteins, the plus-strand RNAs synthesis begins. Functionally, cytoplasmic capping enzyme that catalyzes two virus-specific reactions: methyltransferase and nsP1 guanylyltransferase. mRNA-capping is necessary since all viral RNAs are synthesized in the cytoplasm, and host capping enzymes are restricted to the nucleus. The enzymatic reaction involves a covalent link between 7-methyl-GMP and nsP1, whereas eukaryotic capping enzymes form a covalent complex only with GMP. nsP1 capping consists in the following reactions: GTP is first methylated into 7-methyl-GMP and then is covalently linked to nsP1 to form the m7GMp-nsP1 complex from which 7-methyl-GMP complex is transferred to the mRNA to create the cap structure. NsP1 is also needed for the initiation of the minus-strand RNAs synthesis. Probably serves as a membrane anchor for the replication complex composed of nsP1-nsP4. Palmitoylated nsP1 is remodeling host cell cytoskeleton, and induces filopodium-like structure formation at the surface of the host cell. Its function is as follows. Multifunctional protein whose N-terminus is part of the RNA polymerase complex and displays NTPase, RNA triphosphatase and helicase activities. NTPase and RNA triphosphatase are involved in viral RNA capping and helicase keeps a check on the dsRNA replication intermediates. The C-terminus harbors a protease that specifically cleaves the polyproteins and releases the mature proteins. Required for the shutoff of minus-strand RNAs synthesis. Specifically inhibits the host IFN response by promoting the nuclear export of host STAT1. Also inhibits host transcription by inducing the rapid proteasome-dependent degradation of POLR2A, a catalytic subunit of the RNAPII complex. The resulting inhibition of cellular protein synthesis serves to ensure maximal viral gene expression and to evade host immune response. Seems to be essential for minus-strand RNAs and subgenomic 26S mRNAs synthesis. Displays mono-ADP-ribosylhydrolase activity. ADP-ribosylation is a post-translational modification that controls various processes of the host cell and the virus probably needs to revert it for optimal viral replication. Binds proteins of FXR family and sequesters them into the viral RNA replication complexes thereby inhibiting the formation of host stress granules on viral mRNAs. The nsp3'-FXR complexes bind viral RNAs and probably orchestrate the assembly of viral replication complexes, thanks to the ability of FXR family members to self-assemble and bind DNA. In terms of biological role, seems to be essential for minus-strand RNAs and subgenomic 26S mRNAs synthesis. Displays mono-ADP-ribosylhydrolase activity. ADP-ribosylation is a post-translational modification that controls various processes of the host cell and the virus probably needs to revert it for optimal viral replication. Binds proteins of G3BP family and sequesters them into the viral RNA replication complexes thereby inhibiting the formation of host stress granules on viral mRNAs. The nsp3-G3BP complexes bind viral RNAs and probably orchestrate the assembly of viral replication complexes, thanks to the ability of G3BP family members to self-assemble and bind DNA. Functionally, RNA dependent RNA polymerase. Replicates genomic and antigenomic RNA by recognizing replications specific signals. The early replication complex formed by the polyprotein P123 and nsP4 synthesizes minus-strand RNAs. The late replication complex composed of fully processed nsP1-nsP4 is responsible for the production of genomic and subgenomic plus-strand RNAs. The sequence is that of Polyprotein P1234 from Aedes (Common banded mosquito).